Consider the following 187-residue polypeptide: Peptide deformylase (187 aa).

Positions 114 and 157 each coordinate Fe cation. Residue E158 is part of the active site. Position 161 (H161) interacts with Fe cation.

This sequence belongs to the polypeptide deformylase family. The cofactor is Fe(2+).

It carries out the reaction N-terminal N-formyl-L-methionyl-[peptide] + H2O = N-terminal L-methionyl-[peptide] + formate. Functionally, removes the formyl group from the N-terminal Met of newly synthesized proteins. Requires at least a dipeptide for an efficient rate of reaction. N-terminal L-methionine is a prerequisite for activity but the enzyme has broad specificity at other positions. In Enterococcus faecalis (strain ATCC 700802 / V583), this protein is Peptide deformylase.